The primary structure comprises 71 residues: Small ribosomal subunit protein bS21 (71 aa).

Positions 47-71 (RENATRAKRHAKRVARENARNTRLY) are disordered. Residues 60–71 (VARENARNTRLY) show a composition bias toward basic and acidic residues.

The protein belongs to the bacterial ribosomal protein bS21 family.

The chain is Small ribosomal subunit protein bS21 from Histophilus somni (strain 129Pt) (Haemophilus somnus).